Here is a 212-residue protein sequence, read N- to C-terminus: Thymidylate kinase (212 aa).

10–17 (GGEGSGKT) is an ATP binding site.

Belongs to the thymidylate kinase family.

The catalysed reaction is dTMP + ATP = dTDP + ADP. In terms of biological role, phosphorylation of dTMP to form dTDP in both de novo and salvage pathways of dTTP synthesis. The protein is Thymidylate kinase of Marinomonas sp. (strain MWYL1).